Consider the following 418-residue polypeptide: Putative methylthiotransferase HP_0285 (418 aa).

In terms of domain architecture, MTTase N-terminal spans 2–110 (KKVYFKTFGC…INALLQEKKR (109 aa)). 6 residues coordinate [4Fe-4S] cluster: C11, C45, C74, C144, C148, and C151. The Radical SAM core domain occupies 130 to 355 (FVGKTRAFIK…KDLIFHKNKA (226 aa)).

It belongs to the methylthiotransferase family. It depends on [4Fe-4S] cluster as a cofactor.

The chain is Putative methylthiotransferase HP_0285 from Helicobacter pylori (strain ATCC 700392 / 26695) (Campylobacter pylori).